A 380-amino-acid chain; its full sequence is 4-hydroxy-3-methylbut-2-en-1-yl diphosphate synthase (flavodoxin) (380 aa).

Residues cysteine 280, cysteine 283, cysteine 315, and glutamate 322 each coordinate [4Fe-4S] cluster.

Belongs to the IspG family. [4Fe-4S] cluster serves as cofactor.

The enzyme catalyses (2E)-4-hydroxy-3-methylbut-2-enyl diphosphate + oxidized [flavodoxin] + H2O + 2 H(+) = 2-C-methyl-D-erythritol 2,4-cyclic diphosphate + reduced [flavodoxin]. It participates in isoprenoid biosynthesis; isopentenyl diphosphate biosynthesis via DXP pathway; isopentenyl diphosphate from 1-deoxy-D-xylulose 5-phosphate: step 5/6. Its function is as follows. Converts 2C-methyl-D-erythritol 2,4-cyclodiphosphate (ME-2,4cPP) into 1-hydroxy-2-methyl-2-(E)-butenyl 4-diphosphate. The protein is 4-hydroxy-3-methylbut-2-en-1-yl diphosphate synthase (flavodoxin) of Cutibacterium acnes (strain DSM 16379 / KPA171202) (Propionibacterium acnes).